Here is a 116-residue protein sequence, read N- to C-terminus: NADH-quinone oxidoreductase subunit A (116 aa).

Transmembrane regions (helical) follow at residues 3–23 (FTLL…VIAL), 61–81 (FAIL…WAVI), and 88–108 (QGLI…AYAW).

Belongs to the complex I subunit 3 family. NDH-1 is composed of 14 different subunits. Subunits NuoA, H, J, K, L, M, N constitute the membrane sector of the complex.

Its subcellular location is the cell inner membrane. It catalyses the reaction a quinone + NADH + 5 H(+)(in) = a quinol + NAD(+) + 4 H(+)(out). NDH-1 shuttles electrons from NADH, via FMN and iron-sulfur (Fe-S) centers, to quinones in the respiratory chain. The immediate electron acceptor for the enzyme in this species is believed to be a menaquinone. Couples the redox reaction to proton translocation (for every two electrons transferred, four hydrogen ions are translocated across the cytoplasmic membrane), and thus conserves the redox energy in a proton gradient. In Bacteroides fragilis (strain ATCC 25285 / DSM 2151 / CCUG 4856 / JCM 11019 / LMG 10263 / NCTC 9343 / Onslow / VPI 2553 / EN-2), this protein is NADH-quinone oxidoreductase subunit A.